The following is a 97-amino-acid chain: Serine protease inhibitor Kazal-type 13 (97 aa).

A signal peptide spans 1-26 (MTRRGCWPHRIIFSLILLTWTHVTLA). In terms of domain architecture, Kazal-like spans 36–97 (NWPKPPCKMY…IEFVKYGKCE (62 aa)). 3 disulfides stabilise this stretch: cysteine 42–cysteine 78, cysteine 56–cysteine 75, and cysteine 64–cysteine 96.

As to expression, restricted to the epididymis, with highest levels in the initial segment, including epithelial cells, lumen, and sperm (at protein level). Localizes to the sperm heads, where it is restricted to the acrosomal region in epididymal spermatozoa, but not in testicular spermatozoa (at protein level).

The protein localises to the secreted. Its function is as follows. May be a serine protease inhibitor. Essential for sperm maturation and fertility. Inhibits sperm acrosome reaction, protecting sperm from premature reaction. The sequence is that of Serine protease inhibitor Kazal-type 13 (Spink13) from Rattus norvegicus (Rat).